The sequence spans 84 residues: uncharacterized protein (84 aa).

Residues 5–31 are a coiled coil; it reads KIQEIINELDNLMNRERKYIELVATVE.

This is an uncharacterized protein from Methanocaldococcus jannaschii (strain ATCC 43067 / DSM 2661 / JAL-1 / JCM 10045 / NBRC 100440) (Methanococcus jannaschii).